We begin with the raw amino-acid sequence, 558 residues long: Hsp70-Hsp90 organizing protein 3 (558 aa).

TPR repeat units lie at residues alanine 2–asparagine 35, isoleucine 37–tryptophan 69, serine 70–asparagine 103, and glutamate 136–aspartate 173. The STI1 1 domain maps to glycine 131–tyrosine 170. Residues serine 191 to lysine 232 are disordered. Positions threonine 196–glutamate 208 are enriched in basic and acidic residues. Positions proline 209–glutamate 218 are enriched in acidic residues. The segment covering glutamate 219–lysine 232 has biased composition (basic and acidic residues). A Bipartite nuclear localization signal motif is present at residues lysine 227–lysine 244. 6 TPR repeats span residues alanine 230–aspartate 263, serine 265–leucine 297, alanine 305–proline 342, alanine 369–aspartate 402, arginine 404–phenylalanine 436, and threonine 437–asparagine 470. Positions aspartate 507–isoleucine 546 constitute an STI1 2 domain.

Co-chaperone that forms a complex with HSP70 and HSP90 and preproteins (e.g. chloroplast preproteins). In terms of processing, phosphorylated. Post-translationally, acetylated.

It is found in the cytoplasm. The protein resides in the nucleus. In terms of biological role, mediates the association of the molecular chaperones HSP70 and HSP90. Mediates nuclear encoded chloroplast preproteins binding to HSP90 prior to chloroplastic sorting. Involved in acclimation to heat. This chain is Hsp70-Hsp90 organizing protein 3 (HOP3), found in Arabidopsis thaliana (Mouse-ear cress).